The primary structure comprises 147 residues: 3-dehydroquinate dehydratase (147 aa).

Tyr-24 acts as the Proton acceptor in catalysis. Residues Asn-73, His-79, and Asp-86 each coordinate substrate. His-99 acts as the Proton donor in catalysis. Substrate is bound by residues 100–101 and Arg-110; that span reads LS.

The protein belongs to the type-II 3-dehydroquinase family. Homododecamer.

The catalysed reaction is 3-dehydroquinate = 3-dehydroshikimate + H2O. It functions in the pathway metabolic intermediate biosynthesis; chorismate biosynthesis; chorismate from D-erythrose 4-phosphate and phosphoenolpyruvate: step 3/7. In terms of biological role, catalyzes a trans-dehydration via an enolate intermediate. This is 3-dehydroquinate dehydratase from Hyphomonas neptunium (strain ATCC 15444).